The sequence spans 572 residues: Golgi apyrase (572 aa).

At 1–470 (MVRKYGIFID…KHWMRLFPNK (470 aa)) the chain is on the lumenal side. Glutamate 145 acts as the Proton acceptor in catalysis. Residues 471 to 491 (LFFILSFIFCLFFLFSLVLFG) form a helical membrane-spanning segment. Topologically, residues 492–572 (YDPKRRQRFK…RERTPRSPFP (81 aa)) are cytoplasmic.

This sequence belongs to the GDA1/CD39 NTPase family. The cofactor is Ca(2+). Requires Mg(2+) as cofactor. Mn(2+) serves as cofactor.

It is found in the golgi apparatus. It localises to the membrane. The enzyme catalyses a ribonucleoside 5'-triphosphate + 2 H2O = a ribonucleoside 5'-phosphate + 2 phosphate + 2 H(+). It participates in protein modification; protein glycosylation. Its function is as follows. Catalyzes the hydrolysis of phosphoanhydride bonds of nucleoside tri- and di-phosphates. Required for Golgi glycosylation and cell wall integrity. Involved in N-mannosylation of proteins in Golgi. This Schizosaccharomyces pombe (strain 972 / ATCC 24843) (Fission yeast) protein is Golgi apyrase.